A 464-amino-acid chain; its full sequence is Ribulose bisphosphate carboxylase/oxygenase activase A, chloroplastic (464 aa).

The N-terminal 48 residues, 1 to 48 (MAAAFSSTVGAPASTPTNFLGKKLKKQVTSAVNYHGKSSKANRFTVMA), are a transit peptide targeting the chloroplast. 155 to 162 (GGKGQGKS) contacts ATP.

The protein belongs to the RuBisCO activase family.

Its subcellular location is the plastid. The protein localises to the chloroplast stroma. Its function is as follows. Activation of RuBisCO (ribulose-1,5-bisphosphate carboxylase/oxygenase; EC 4.1.1.39) involves the ATP-dependent carboxylation of the epsilon-amino group of lysine leading to a carbamate structure. The protein is Ribulose bisphosphate carboxylase/oxygenase activase A, chloroplastic (RCAA) of Hordeum vulgare (Barley).